Consider the following 407-residue polypeptide: Tryptophan synthase beta chain (407 aa).

Over residues 1 to 11 (MSTAPSQQHAS) the composition is skewed to polar residues. Residues 1-25 (MSTAPSQQHASAQVPDPRGRFGDFG) are disordered. An N6-(pyridoxal phosphate)lysine modification is found at Lys100.

This sequence belongs to the TrpB family. In terms of assembly, tetramer of two alpha and two beta chains. The cofactor is pyridoxal 5'-phosphate.

The catalysed reaction is (1S,2R)-1-C-(indol-3-yl)glycerol 3-phosphate + L-serine = D-glyceraldehyde 3-phosphate + L-tryptophan + H2O. It functions in the pathway amino-acid biosynthesis; L-tryptophan biosynthesis; L-tryptophan from chorismate: step 5/5. Its function is as follows. The beta subunit is responsible for the synthesis of L-tryptophan from indole and L-serine. The chain is Tryptophan synthase beta chain from Rhodopirellula baltica (strain DSM 10527 / NCIMB 13988 / SH1).